Reading from the N-terminus, the 262-residue chain is Nurim (262 aa).

The Nuclear segment spans residues 1 to 4 (MAPA). A helical transmembrane segment spans residues 5–28 (LLLIPAALASFILAFGTGVEFVRF). Residues 29–58 (TSLRPLLGRISESGSPDARQGWLAALQDQS) are Perinuclear space-facing. Residues 59 to 80 (ILVPLVWDLGLLLLFVGQHSLM) traverse the membrane as a helical segment. Topologically, residues 81 to 97 (ATETVKEWMSRYFGVLQ) are nuclear. The chain crosses the membrane as a helical span at residues 98–114 (RSLYVACTALALQLVMR). Over 115 to 133 (YWEPVPRGPVLWETRTEPW) the chain is Perinuclear space. Residues 134-164 (ATWVPLLCFVLHVISWLLIFSILLVFDYAEL) traverse the membrane as a helical segment. Residues 165–191 (MGLKQVYYHVLGLGEPLALKSPRALRL) are Nuclear-facing. A helical membrane pass occupies residues 192–210 (FSHLRHPVCVELLTVLWVV). The Perinuclear space segment spans residues 211–216 (PTLGTD). Residues 217 to 234 (RLLLALLLTLYLGLAHGL) traverse the membrane as a helical segment. Topologically, residues 235 to 262 (DQHDLRYLRAQLQRKLHLLSRPQDGEAE) are nuclear.

It belongs to the nurim family.

The protein resides in the nucleus inner membrane. This is Nurim (NRM) from Bos taurus (Bovine).